The primary structure comprises 447 residues: ATP-dependent protease ATPase subunit HslU (447 aa).

Residues isoleucine 18, 60–65, aspartate 259, glutamate 325, and arginine 397 each bind ATP; that span reads GVGKTE.

Belongs to the ClpX chaperone family. HslU subfamily. A double ring-shaped homohexamer of HslV is capped on each side by a ring-shaped HslU homohexamer. The assembly of the HslU/HslV complex is dependent on binding of ATP.

Its subcellular location is the cytoplasm. In terms of biological role, ATPase subunit of a proteasome-like degradation complex; this subunit has chaperone activity. The binding of ATP and its subsequent hydrolysis by HslU are essential for unfolding of protein substrates subsequently hydrolyzed by HslV. HslU recognizes the N-terminal part of its protein substrates and unfolds these before they are guided to HslV for hydrolysis. This chain is ATP-dependent protease ATPase subunit HslU, found in Burkholderia ambifaria (strain MC40-6).